We begin with the raw amino-acid sequence, 106 residues long: Cell division topological specificity factor (106 aa).

The protein belongs to the MinE family.

In terms of biological role, prevents the cell division inhibition by proteins MinC and MinD at internal division sites while permitting inhibition at polar sites. This ensures cell division at the proper site by restricting the formation of a division septum at the midpoint of the long axis of the cell. The sequence is that of Cell division topological specificity factor from Prochlorococcus marinus subsp. pastoris (strain CCMP1986 / NIES-2087 / MED4).